Here is a 364-residue protein sequence, read N- to C-terminus: MFLCVIIPCLCSYLCSLFSWLLGQIPSFLFDKINESWLTSTKRNVEIVKNLMDKISQLPDELLVKVLSFLSTKDAVSTSILSMRWKSLWMWLPKLEYNFRHYSVSEGQGLARFITSSLRVHKAPAIESLSLKFRYGAIGSIKPKDIYLWVSLAVHVSNVRELSLKLFNFAELPTKLPKSLCKCKSIVILKLKDEILVDVPRKVCLPSLKTLFLGRVTYSDANSLHRLLSNCPVLEDLVMERDKIDNLGKLSVIVKSLQRLTLKMSRPCHLDGLKMNSPSLKYLKVIDERLESDSDDESDSDSPRYFYDFEDMPKLEEADFVLTFQNIKKFFGSITSVKRLSLCLGVYTEEVICFHHSIHLIVEQ.

One can recognise an F-box domain in the interval 52 to 98 (MDKISQLPDELLVKVLSFLSTKDAVSTSILSMRWKSLWMWLPKLEYN). LRR repeat units follow at residues 158–179 (NVRE…LPKS), 185–206 (SIVI…VCLP), 207–228 (SLKT…HRLL), 233–254 (VLED…SVIV), 256–277 (SLQR…KMNS), and 279–300 (SLKY…ESDS).

This Arabidopsis thaliana (Mouse-ear cress) protein is F-box/LRR-repeat protein At1g55660.